Consider the following 131-residue polypeptide: Holo-[acyl-carrier-protein] synthase (131 aa).

Mg(2+) contacts are provided by D8 and E63.

It belongs to the P-Pant transferase superfamily. AcpS family. It depends on Mg(2+) as a cofactor.

It localises to the cytoplasm. It catalyses the reaction apo-[ACP] + CoA = holo-[ACP] + adenosine 3',5'-bisphosphate + H(+). Its function is as follows. Transfers the 4'-phosphopantetheine moiety from coenzyme A to a Ser of acyl-carrier-protein. This chain is Holo-[acyl-carrier-protein] synthase, found in Shewanella halifaxensis (strain HAW-EB4).